A 610-amino-acid chain; its full sequence is Glutamine--fructose-6-phosphate aminotransferase [isomerizing] (610 aa).

C2 (nucleophile; for GATase activity) is an active-site residue. Positions 2–219 (CGIVGAVAQR…EGDVAEITRR (218 aa)) constitute a Glutamine amidotransferase type-2 domain. 2 SIS domains span residues 287 to 427 (ADEL…LRGM) and 459 to 600 (LAEG…VDQP). K605 (for Fru-6P isomerization activity) is an active-site residue.

As to quaternary structure, homodimer.

Its subcellular location is the cytoplasm. It catalyses the reaction D-fructose 6-phosphate + L-glutamine = D-glucosamine 6-phosphate + L-glutamate. Catalyzes the first step in hexosamine metabolism, converting fructose-6P into glucosamine-6P using glutamine as a nitrogen source. This is Glutamine--fructose-6-phosphate aminotransferase [isomerizing] from Pectobacterium atrosepticum (strain SCRI 1043 / ATCC BAA-672) (Erwinia carotovora subsp. atroseptica).